A 90-amino-acid chain; its full sequence is Probable Fe(2+)-trafficking protein (90 aa).

The protein belongs to the Fe(2+)-trafficking protein family.

Could be a mediator in iron transactions between iron acquisition and iron-requiring processes, such as synthesis and/or repair of Fe-S clusters in biosynthetic enzymes. The protein is Probable Fe(2+)-trafficking protein of Idiomarina loihiensis (strain ATCC BAA-735 / DSM 15497 / L2-TR).